The sequence spans 217 residues: 3,4-dihydroxy-2-butanone 4-phosphate synthase (217 aa).

D-ribulose 5-phosphate contacts are provided by residues 37 to 38 (RE), Asp-42, 150 to 154 (RRGHT), and Glu-174. Glu-38 is a binding site for Mg(2+). His-153 contributes to the Mg(2+) binding site.

Belongs to the DHBP synthase family. In terms of assembly, homodimer. It depends on Mg(2+) as a cofactor. Requires Mn(2+) as cofactor.

It catalyses the reaction D-ribulose 5-phosphate = (2S)-2-hydroxy-3-oxobutyl phosphate + formate + H(+). It functions in the pathway cofactor biosynthesis; riboflavin biosynthesis; 2-hydroxy-3-oxobutyl phosphate from D-ribulose 5-phosphate: step 1/1. Functionally, catalyzes the conversion of D-ribulose 5-phosphate to formate and 3,4-dihydroxy-2-butanone 4-phosphate. The sequence is that of 3,4-dihydroxy-2-butanone 4-phosphate synthase from Shewanella loihica (strain ATCC BAA-1088 / PV-4).